A 326-amino-acid polypeptide reads, in one-letter code: Polycomb complex protein BMI-1 (326 aa).

The RING-type zinc-finger motif lies at 18–57 (CVLCGGYFIDATTIIECLHSFCKTCIVRYLETSKYCPICD). The Nuclear localization signal motif lies at 81–95 (KLVPGLFKNEMKRRR). The interaction with PHC2 stretch occupies residues 162-182 (RYLRCPAAMTVMHLRKFLRSK). The interval 164 to 228 (LRCPAAMTVM…GPLPLKYRVR (65 aa)) is interaction with E4F1. A disordered region spans residues 236–326 (IGHQREGLSN…INGSSATSSG (91 aa)). Low complexity predominate over residues 265–278 (LPSTSSCLPSPSTP). Residues 279–310 (VQSPHPQFPHISSTMNGTSSSPGSNHQSSFTN) are compositionally biased toward polar residues. The segment covering 315–326 (SSINGSSATSSG) has biased composition (low complexity).

In terms of assembly, component of a PRC1-like complex.

Its subcellular location is the nucleus. It is found in the cytoplasm. In terms of biological role, component of a Polycomb group (PcG) multiprotein PRC1-like complex, a complex class required to maintain the transcriptionally repressive state of many genes, including Hox genes, throughout development. PcG PRC1 complex acts via chromatin remodeling and modification of histones; it mediates monoubiquitination of histone H2A 'Lys-119', rendering chromatin heritably changed in its expressibility. In the PRC1-like complex, regulates the E3 ubiquitin-protein ligase activity of RNF2/RING2. In Gallus gallus (Chicken), this protein is Polycomb complex protein BMI-1 (BMI1).